The primary structure comprises 312 residues: Light-independent protochlorophyllide reductase iron-sulfur ATP-binding protein (312 aa).

Residues 55–60 (GIGKST) and Lys-84 contribute to the ATP site. Ser-59 is a Mg(2+) binding site. Positions 140 and 174 each coordinate [4Fe-4S] cluster. ATP-binding positions include 225–226 (NR) and 249–251 (PDL).

Belongs to the NifH/BchL/ChlL family. Homodimer. Protochlorophyllide reductase is composed of three subunits; BchL, BchN and BchB. The cofactor is [4Fe-4S] cluster.

The enzyme catalyses chlorophyllide a + oxidized 2[4Fe-4S]-[ferredoxin] + 2 ADP + 2 phosphate = protochlorophyllide a + reduced 2[4Fe-4S]-[ferredoxin] + 2 ATP + 2 H2O. It participates in porphyrin-containing compound metabolism; bacteriochlorophyll biosynthesis (light-independent). In terms of biological role, component of the dark-operative protochlorophyllide reductase (DPOR) that uses Mg-ATP and reduced ferredoxin to reduce ring D of protochlorophyllide (Pchlide) to form chlorophyllide a (Chlide). This reaction is light-independent. The L component serves as a unique electron donor to the NB-component of the complex, and binds Mg-ATP. The polypeptide is Light-independent protochlorophyllide reductase iron-sulfur ATP-binding protein (Rhodopseudomonas palustris (strain HaA2)).